The sequence spans 447 residues: uncharacterized protein (447 aa).

The protein belongs to the class-II fumarase/aspartase family.

The protein resides in the cytoplasm. Its subcellular location is the nucleus. This is an uncharacterized protein from Schizosaccharomyces pombe (strain 972 / ATCC 24843) (Fission yeast).